The following is a 708-amino-acid chain: ATP-dependent DNA helicase Hel308 (708 aa).

Positions 1 to 29 match the Q motif motif; sequence MSIDDLKLPSNVIDIIKNRGIKKLNPPQT. Residues Q28 and 46 to 53 contribute to the ATP site; that span reads SPTGSGKT. The Helicase ATP-binding domain occupies 33–196; the sequence is KKGLLDGNRL…WLGAEPVATN (164 aa). Positions 145 to 148 match the DEAH box motif; the sequence is DELH. The 207-residue stretch at 229-435 folds into the Helicase C-terminal domain; the sequence is HGDDAIIAYT…ERAFYTFLLG (207 aa).

Belongs to the helicase family. Hel308 subfamily. Monomer.

It carries out the reaction Couples ATP hydrolysis with the unwinding of duplex DNA by translocating in the 3'-5' direction.. It catalyses the reaction ATP + H2O = ADP + phosphate + H(+). DNA-dependent ATPase and 3'-5' DNA helicase that may be involved in repair of stalled replication forks. In Saccharolobus solfataricus (strain ATCC 35092 / DSM 1617 / JCM 11322 / P2) (Sulfolobus solfataricus), this protein is ATP-dependent DNA helicase Hel308.